The primary structure comprises 121 residues: Small ribosomal subunit protein uS13 (121 aa).

The segment at 97–121 (VRGQRTRTNARTRRGARKTVAGKKK) is disordered. The segment covering 100-121 (QRTRTNARTRRGARKTVAGKKK) has biased composition (basic residues).

This sequence belongs to the universal ribosomal protein uS13 family. Part of the 30S ribosomal subunit. Forms a loose heterodimer with protein S19. Forms two bridges to the 50S subunit in the 70S ribosome.

Its function is as follows. Located at the top of the head of the 30S subunit, it contacts several helices of the 16S rRNA. In the 70S ribosome it contacts the 23S rRNA (bridge B1a) and protein L5 of the 50S subunit (bridge B1b), connecting the 2 subunits; these bridges are implicated in subunit movement. Contacts the tRNAs in the A and P-sites. The sequence is that of Small ribosomal subunit protein uS13 from Synechococcus sp. (strain CC9605).